Here is a 219-residue protein sequence, read N- to C-terminus: Large ribosomal subunit protein uL16 (219 aa).

Belongs to the universal ribosomal protein uL16 family. Component of the small ribosomal subunit. Mature ribosomes consist of a small (40S) and a large (60S) subunit. The 40S subunit contains about 33 different proteins and 1 molecule of RNA (18S). The 60S subunit contains about 49 different proteins and 3 molecules of RNA (25S, 5.8S and 5S).

This Solanum melongena (Eggplant) protein is Large ribosomal subunit protein uL16 (RPL10).